The sequence spans 94 residues: Co-chaperonin GroES (94 aa).

Belongs to the GroES chaperonin family. In terms of assembly, heptamer of 7 subunits arranged in a ring. Interacts with the chaperonin GroEL.

The protein localises to the cytoplasm. Together with the chaperonin GroEL, plays an essential role in assisting protein folding. The GroEL-GroES system forms a nano-cage that allows encapsulation of the non-native substrate proteins and provides a physical environment optimized to promote and accelerate protein folding. GroES binds to the apical surface of the GroEL ring, thereby capping the opening of the GroEL channel. The polypeptide is Co-chaperonin GroES (Clostridium botulinum (strain Eklund 17B / Type B)).